Reading from the N-terminus, the 504-residue chain is Xylose import ATP-binding protein XylG (504 aa).

ABC transporter domains follow at residues 6–243 (LEMK…VGRE) and 260–504 (LKVD…TGGK). Residue 38-45 (GENGAGKS) coordinates ATP.

Belongs to the ABC transporter superfamily. Xylose importer (TC 3.A.1.2.4) family. In terms of assembly, the complex is composed of two ATP-binding proteins (XylG), two transmembrane proteins (XylH) and a solute-binding protein (XylF).

The protein resides in the cell membrane. The enzyme catalyses D-xylose(out) + ATP + H2O = D-xylose(in) + ADP + phosphate + H(+). Functionally, part of the ABC transporter complex XylFGH involved in xylose import. Responsible for energy coupling to the transport system. The sequence is that of Xylose import ATP-binding protein XylG from Geobacillus kaustophilus (strain HTA426).